The primary structure comprises 462 residues: Arginine-specific demethylase JMJ20 (462 aa).

In terms of domain architecture, JmjC spans Val-115 to Tyr-287. Residues His-177, Asp-179, and His-255 each coordinate Fe cation.

Belongs to the JARID1 histone demethylase family. Fe(2+) serves as cofactor. Mostly expressed in leaves, and, to a lower extent, in inflorescences, roots, siliques and stems.

It localises to the nucleus. It carries out the reaction N(omega),N(omega)-dimethyl-L-arginyl-[protein] + 2-oxoglutarate + O2 = N(omega)-methyl-L-arginyl-[protein] + formaldehyde + succinate + CO2. Histone demethylase that demethylates 'Arg-3' (H4R3me) of histone H4 with a specific activity for H4R3me2. Involved in the positive regulation of gene expression. Together with JMJ22, positively regulates seed germination by promoting the removal of repressive histone arginine methylations (e.g. H4R3me2) at GA3ox1 and GA3ox2 to trigger gibberellic acid (GA) biosynthesis. This is Arginine-specific demethylase JMJ20 from Arabidopsis thaliana (Mouse-ear cress).